Consider the following 257-residue polypeptide: Imidazole glycerol phosphate synthase subunit HisF (257 aa).

Active-site residues include Asp-11 and Asp-130.

It belongs to the HisA/HisF family. Heterodimer of HisH and HisF.

Its subcellular location is the cytoplasm. It carries out the reaction 5-[(5-phospho-1-deoxy-D-ribulos-1-ylimino)methylamino]-1-(5-phospho-beta-D-ribosyl)imidazole-4-carboxamide + L-glutamine = D-erythro-1-(imidazol-4-yl)glycerol 3-phosphate + 5-amino-1-(5-phospho-beta-D-ribosyl)imidazole-4-carboxamide + L-glutamate + H(+). It functions in the pathway amino-acid biosynthesis; L-histidine biosynthesis; L-histidine from 5-phospho-alpha-D-ribose 1-diphosphate: step 5/9. Its function is as follows. IGPS catalyzes the conversion of PRFAR and glutamine to IGP, AICAR and glutamate. The HisF subunit catalyzes the cyclization activity that produces IGP and AICAR from PRFAR using the ammonia provided by the HisH subunit. This Vibrio campbellii (strain ATCC BAA-1116) protein is Imidazole glycerol phosphate synthase subunit HisF.